The following is a 1960-amino-acid chain: [F-actin]-monooxygenase MICAL3 (1960 aa).

Residues 2 to 494 are monooxygenase domain; it reads EESKNEATNR…RHLYDTGDTK (493 aa). FAD is bound by residues cysteine 97, 116–118, 123–125, phenylalanine 183, tyrosine 298, and aspartate 398; these read EKR and RNN. The 107-residue stretch at 518 to 624 folds into the Calponin-homology (CH) domain; sequence VARSSKLLGW…YLTQFYEMFK (107 aa). A Phosphoserine modification is found at serine 649. Residues 658 to 704 are disordered; that stretch reads GQTISRKRSPKDKKEKDLDGAGKRRKTSQSEEEDTPRGHRGARPTLV. Residues 669–679 show a composition bias toward basic and acidic residues; it reads DKKEKDLDGAG. A phosphoserine mark is found at serine 685 and serine 687. The region spanning 762-824 is the LIM zinc-binding domain; sequence DTCYFCQKRV…KPHYCYRLSG (63 aa). 8 residues coordinate Zn(2+): cysteine 764, cysteine 767, histidine 785, cysteine 788, cysteine 791, cysteine 794, cysteine 814, and histidine 817. 2 disordered regions span residues 826–887 and 906–1295; these read AQRK…LRGT and LEEV…EALK. Threonine 887 bears the Phosphothreonine mark. The residue at position 971 (serine 971) is a Phosphoserine. Over residues 984–1014 the composition is skewed to acidic residues; it reads GEEEEEDEEDEEEEEEEEDEEDEEEDEDESS. 2 stretches are compositionally biased toward basic and acidic residues: residues 1039 to 1051 and 1072 to 1084; these read HWTH…EERA and DVDS…KGEA. Phosphoserine is present on residues serine 1129, serine 1139, serine 1156, and serine 1188. 2 stretches are compositionally biased toward pro residues: residues 1192–1203 and 1217–1233; these read SPLPEPSTPPAE and RTPP…PPTQ. Phosphoserine is present on serine 1250. Residue threonine 1252 is modified to Phosphothreonine. Phosphoserine occurs at positions 1254, 1286, and 1313. Residues 1277 to 1286 show a composition bias toward polar residues; the sequence is QGVTKDTLGS. 2 disordered regions span residues 1316 to 1550 and 1564 to 1782; these read LTPV…KRGL and RMRA…EEEL. Position 1317 is a phosphothreonine (threonine 1317). Residues 1379–1393 show a composition bias toward basic and acidic residues; it reads PDREPKGPREEHRDL. Low complexity predominate over residues 1394-1406; the sequence is SSSSGLGLQGSSS. Serine 1404 is modified (phosphoserine). The span at 1407-1425 shows a compositional bias: polar residues; it reads RTRTPGSQSFNTSDSTMLT. Threonine 1425 is modified (phosphothreonine). Acidic residues predominate over residues 1485–1503; that stretch reads SVDEIPFADDVEDTYDDNT. A compositionally biased stretch (low complexity) spans 1594-1611; the sequence is AAAAPRTPRTPAPRRATA. The span at 1616–1627 shows a compositional bias: basic and acidic residues; that stretch reads GPEEPAPRHEAT. The span at 1633–1653 shows a compositional bias: low complexity; that stretch reads SPPSDSGGPDGSVTSSEGSSG. A compositionally biased stretch (basic residues) spans 1654-1672; it reads KSKKRSSLFSPRRSKKEKK. Phosphoserine occurs at positions 1660 and 1663. Residues 1718 to 1727 show a composition bias toward polar residues; that stretch reads CPSTPSSGTT. Residues 1762-1778 show a composition bias toward basic and acidic residues; sequence VLERTSQKSRKEPRTYT. The stretch at 1779–1952 forms a coiled coil; it reads EEELNAKLTR…DKDLEAAMLS (174 aa). One can recognise a bMERB domain in the interval 1799 to 1948; it reads KQEELKRLHR…EKEEDKDLEA (150 aa). The residue at position 1870 (serine 1870) is a Phosphoserine.

Belongs to the Mical family. In terms of assembly, interacts with RAB1B, RAB8A, RAB10, RAB13 and RAB15 (in their GTP-bound forms); binding to RAB1B is of low affinity compared to other Rab proteins; at least in case of RAB8A can bind 2 molecules of RAB8A simultaneously through a high and a low affinity binding site, respectively. Interacts with ERC1 and RAB8A; may bridge ERC1 with RAB8A. Interacts with KIF23 and ERC1; enhances the interaction between KIF23 and ERC1. Interacts with NINL. It depends on FAD as a cofactor.

The protein localises to the cytoplasm. The protein resides in the cell cortex. It is found in the cytoskeleton. It localises to the nucleus. Its subcellular location is the midbody. The protein localises to the spindle. The protein resides in the cilium basal body. It carries out the reaction L-methionyl-[F-actin] + NADPH + O2 + H(+) = L-methionyl-(R)-S-oxide-[F-actin] + NADP(+) + H2O. Monooxygenase that promotes depolymerization of F-actin by mediating oxidation of specific methionine residues on actin to form methionine-sulfoxide, resulting in actin filament disassembly and preventing repolymerization. In the absence of actin, it also functions as a NADPH oxidase producing H(2)O(2). Seems to act as Rab effector protein and play a role in vesicle trafficking. Involved in exocytic vesicles tethering and fusion: the monooxygenase activity is required for this process and implicates RAB8A associated with exocytotic vesicles. Required for cytokinesis. Contributes to stabilization and/or maturation of the intercellular bridge independently of its monooxygenase activity. Promotes recruitment of Rab8 and ERC1 to the intercellular bridge, and together these proteins are proposed to function in timely abscission. The polypeptide is [F-actin]-monooxygenase MICAL3 (MICAL3) (Bos taurus (Bovine)).